The sequence spans 186 residues: Lipoprotein signal peptidase (186 aa).

A run of 3 helical transmembrane segments spans residues 11 to 31 (WIPL…KLLV), 44 to 64 (VLGD…FSIG), and 70 to 90 (VLRT…IVFS). Catalysis depends on residues aspartate 128 and aspartate 150. Residues 145-165 (AFNIADAVIMTCGLLLIISFI) traverse the membrane as a helical segment.

It belongs to the peptidase A8 family.

It is found in the cell inner membrane. The catalysed reaction is Release of signal peptides from bacterial membrane prolipoproteins. Hydrolyzes -Xaa-Yaa-Zaa-|-(S,diacylglyceryl)Cys-, in which Xaa is hydrophobic (preferably Leu), and Yaa (Ala or Ser) and Zaa (Gly or Ala) have small, neutral side chains.. It functions in the pathway protein modification; lipoprotein biosynthesis (signal peptide cleavage). In terms of biological role, this protein specifically catalyzes the removal of signal peptides from prolipoproteins. The polypeptide is Lipoprotein signal peptidase (Treponema pallidum (strain Nichols)).